The primary structure comprises 184 residues: Cathelicidin-related peptide Pt_CRAMP2 (184 aa).

The signal sequence occupies residues 1–22 (MDGFFWKTWLVVAALAIGGTSS). Positions 23 to 150 (LPHKPLTYEE…EDEKDQPRRV (128 aa)) are excised as a propeptide. 2 cysteine pairs are disulfide-bonded: cysteine 81–cysteine 92 and cysteine 103–cysteine 120. The segment covering 125–144 (EDEEQNQEEEEEEEKEEDEK) has biased composition (acidic residues). Positions 125–147 (EDEEQNQEEEEEEEKEEDEKDQP) are disordered.

This sequence belongs to the cathelicidin family. In terms of tissue distribution, expressed by the venom gland.

It is found in the secreted. It localises to the target cell membrane. Its function is as follows. Potent antimicrobial peptide against most of Gram-negative bacteria, some Gram-positive bacteria (Bacillus) and some fungi (C.albicans, P.pastoris, A.terreus, A.nidulans, and C.globosum). Adopts an amphipathic alpha helical conformation, that may allow to partition into the target membrane. No hemolytic and cytotoxic activities have been observed on mammalian cells. This chain is Cathelicidin-related peptide Pt_CRAMP2, found in Pseudonaja textilis (Eastern brown snake).